Consider the following 880-residue polypeptide: Alanine--tRNA ligase (880 aa).

Zn(2+)-binding residues include His-566, His-570, Cys-668, and His-672.

This sequence belongs to the class-II aminoacyl-tRNA synthetase family. Requires Zn(2+) as cofactor.

It localises to the cytoplasm. The enzyme catalyses tRNA(Ala) + L-alanine + ATP = L-alanyl-tRNA(Ala) + AMP + diphosphate. Catalyzes the attachment of alanine to tRNA(Ala) in a two-step reaction: alanine is first activated by ATP to form Ala-AMP and then transferred to the acceptor end of tRNA(Ala). Also edits incorrectly charged Ser-tRNA(Ala) and Gly-tRNA(Ala) via its editing domain. The polypeptide is Alanine--tRNA ligase (Nostoc punctiforme (strain ATCC 29133 / PCC 73102)).